A 415-amino-acid chain; its full sequence is Imidazolonepropionase (415 aa).

Residues His75 and His77 each contribute to the Fe(3+) site. Residues His75 and His77 each contribute to the Zn(2+) site. 4-imidazolone-5-propanoate-binding residues include Arg84, Tyr147, and His180. Tyr147 serves as a coordination point for N-formimidoyl-L-glutamate. His245 serves as a coordination point for Fe(3+). His245 provides a ligand contact to Zn(2+). Gln248 is a 4-imidazolone-5-propanoate binding site. Asp320 serves as a coordination point for Fe(3+). Residue Asp320 coordinates Zn(2+). N-formimidoyl-L-glutamate-binding residues include Asn322 and Gly324. Thr325 lines the 4-imidazolone-5-propanoate pocket.

Belongs to the metallo-dependent hydrolases superfamily. HutI family. Zn(2+) serves as cofactor. Requires Fe(3+) as cofactor.

The protein resides in the cytoplasm. It catalyses the reaction 4-imidazolone-5-propanoate + H2O = N-formimidoyl-L-glutamate. Its pathway is amino-acid degradation; L-histidine degradation into L-glutamate; N-formimidoyl-L-glutamate from L-histidine: step 3/3. Functionally, catalyzes the hydrolytic cleavage of the carbon-nitrogen bond in imidazolone-5-propanoate to yield N-formimidoyl-L-glutamate. It is the third step in the universal histidine degradation pathway. The chain is Imidazolonepropionase from Photorhabdus laumondii subsp. laumondii (strain DSM 15139 / CIP 105565 / TT01) (Photorhabdus luminescens subsp. laumondii).